A 356-amino-acid polypeptide reads, in one-letter code: Phospho-2-dehydro-3-deoxyheptonate aldolase, Tyr-sensitive (356 aa).

This sequence belongs to the class-I DAHP synthase family. Requires a divalent metal cation as cofactor.

The enzyme catalyses D-erythrose 4-phosphate + phosphoenolpyruvate + H2O = 7-phospho-2-dehydro-3-deoxy-D-arabino-heptonate + phosphate. It functions in the pathway metabolic intermediate biosynthesis; chorismate biosynthesis; chorismate from D-erythrose 4-phosphate and phosphoenolpyruvate: step 1/7. With respect to regulation, specifically feedback inhibited by tyrosine with 50% inhibition observed at 9 microM tyrosine, pH 7.0. Functionally, stereospecific condensation of phosphoenolpyruvate (PEP) and D-erythrose-4-phosphate (E4P) giving rise to 3-deoxy-D-arabino-heptulosonate-7-phosphate (DAHP). In Escherichia coli (strain K12), this protein is Phospho-2-dehydro-3-deoxyheptonate aldolase, Tyr-sensitive (aroF).